A 614-amino-acid polypeptide reads, in one-letter code: Beta-glucosidase 33 (614 aa).

The N-terminal stretch at 1–26 is a signal peptide; it reads MATATLTLFLGLLALTSTILSFNADA. A beta-D-glucoside is bound by residues glutamine 113, histidine 217, and 262–263; that span reads NE. Glutamate 263 (proton donor) is an active-site residue. Residues cysteine 282 and cysteine 290 are joined by a disulfide bond. N-linked (GlcNAc...) asparagine glycosylation is present at asparagine 344. Tyrosine 407 contributes to the a beta-D-glucoside binding site. Residues asparagine 419, asparagine 432, and asparagine 439 are each glycosylated (N-linked (GlcNAc...) asparagine). Glutamate 479 contributes to the a beta-D-glucoside binding site. The active-site Nucleophile is the glutamate 479. Asparagine 491 carries an N-linked (GlcNAc...) asparagine glycan. Residues tryptophan 529, 536 to 537, and phenylalanine 545 each bind a beta-D-glucoside; that span reads EW.

The protein belongs to the glycosyl hydrolase 1 family.

The enzyme catalyses Hydrolysis of terminal, non-reducing beta-D-glucosyl residues with release of beta-D-glucose.. The polypeptide is Beta-glucosidase 33 (Arabidopsis thaliana (Mouse-ear cress)).